A 417-amino-acid polypeptide reads, in one-letter code: Squamosa promoter-binding-like protein 14 (417 aa).

Composition is skewed to gly residues over residues 1–26 (MEMA…GGGG) and 51–60 (AGGGGTGSGS). Disordered regions lie at residues 1–32 (MEMA…EHRQ) and 51–102 (AGGG…PPPP). Positions 61 to 74 (GSASAAPPSSSSKA) are enriched in low complexity. Over residues 75-84 (AGGGRGGGGK) the composition is skewed to gly residues. Residues 101 to 178 (PPRCQVEGCG…AGHNERRRRP (78 aa)) form an SBP-type zinc finger. Zn(2+) contacts are provided by Cys104, Cys109, Cys126, His129, Cys145, Cys148, and His152. A Bipartite nuclear localization signal motif is present at residues 161–177 (KRSCRRRLAGHNERRRR). Ser163 is modified (phosphoserine). A Zn(2+)-binding site is contributed by Cys164. The disordered stretch occupies residues 387 to 417 (LQGNGPAPAPRIDPGSGSTFDQTSNTMDWSL). Positions 402 to 417 (SGSTFDQTSNTMDWSL) are enriched in polar residues.

Interacts with PCF1 and PCF2. Interacts with IPI1. Interacts with D53. Interacts with SLR1. Interacts (via C-terminus) with SHI1. Post-translationally, phosphorylated at Ser-163 in response to infection by the fungal pathogen Magnaporthe oryzae. In terms of processing, ubiquitinated by IPI1, which leads to proteasomal degradation. As to expression, expressed in young panicles. Expressed in the shoot apex at both the vegetative and reproductive stages. Highly expressed in the promordia of primary and secondary branches. Highly expressed in young panicles.

The protein resides in the nucleus. Transcriptional activator that binds to the SBP-box DNA core binding motif 5'-GTAC-3'. Can target the TCP motif 5'-TGGGCC/T-3' through interaction with PCF1 and PCF2. Key regulator of the plant architecture that controls shoot branching and panicle development. Promotes panicle branching. Promotes high grain yield. Binds to the promoters of TB1 and DEP1. Suppresses rice tillering mainly through positive regulation of TB1. Regulates plant height and panicle length through positive regulation of DEP1. Repressed by D53 in strigolactone (SL) signaling. Acts with D53 to mediate the SL-regulated tiller development. Functions as a direct downstream component of D53 in regulating tiller number and SL-induced gene expression. Binds directly to the D53 promoter and plays a critical role in the negative feedback regulation of SL-induced D53 expression. Involved in defense response against pathogens. Phosphorylated at Ser-163 in response to infection by the fungal pathogen Magnaporthe oryzae. Phosphorylation reduces SPL14/IPA1 binding to the GTAC site in the DEP1 promoter and enhances binding to the TGGGCC site in the WRKY45 promoter. Binding to the promoter of the pathogen defense gene WRKY45 activates its expression, leading to enhanced disease resistance. Reduces gibberellin-mediated disease susceptibility by stabilizing SLR1. Possesses transactivation activity in yeast cells. This is Squamosa promoter-binding-like protein 14 from Oryza sativa subsp. japonica (Rice).